A 220-amino-acid polypeptide reads, in one-letter code: Probable nicotinate-nucleotide adenylyltransferase (220 aa).

This sequence belongs to the NadD family.

The catalysed reaction is nicotinate beta-D-ribonucleotide + ATP + H(+) = deamido-NAD(+) + diphosphate. Its pathway is cofactor biosynthesis; NAD(+) biosynthesis; deamido-NAD(+) from nicotinate D-ribonucleotide: step 1/1. In terms of biological role, catalyzes the reversible adenylation of nicotinate mononucleotide (NaMN) to nicotinic acid adenine dinucleotide (NaAD). This chain is Probable nicotinate-nucleotide adenylyltransferase, found in Serratia proteamaculans (strain 568).